The chain runs to 486 residues: Maintenance of mitochondrial morphology protein 1 (486 aa).

The Lumenal segment spans residues 1–19 (MSNDTSAQPAQSSLSFTQG). Residues 20–40 (LLVGQLSVVLLIGAFIKFFIF) traverse the membrane as a helical segment. Residues 41-486 (GEASPSSSRS…GSLPDVVPVT (446 aa)) lie on the Cytoplasmic side of the membrane. 4 disordered regions span residues 45–98 (PSSS…RSIL), 269–318 (QTST…AGTT), 393–412 (VRGQEEQQEVGSSGNAGVST), and 420–486 (ARDA…VPVT). The segment covering 51–61 (QTRRTSPHKRS) has biased composition (basic residues). A compositionally biased stretch (basic and acidic residues) spans 70-79 (LGSRSLKEKP). 4 stretches are compositionally biased toward polar residues: residues 80–96 (SSNVLRPVPSSSTNTRS), 269–291 (QTSTHLATSPSNIDPTLQTNDYS), 307–318 (EQATQANNAGTT), and 401–412 (EVGSSGNAGVST). The SMP-LTD domain maps to 125–382 (QPESLDWFNV…EPRVQVVALP (258 aa)). Basic and acidic residues-rich tracts occupy residues 429–440 (HATRDADMEGLR) and 462–473 (DSREQACRDDPF).

This sequence belongs to the MMM1 family. Homodimer. Component of the ER-mitochondria encounter structure (ERMES) or MDM complex, composed of MMM1, MDM10, MDM12 and MDM34. An MMM1 homodimer associates with one molecule of MDM12 on each side in a pairwise head-to-tail manner, and the SMP-LTD domains of MMM1 and MDM12 generate a continuous hydrophobic tunnel for phospholipid trafficking.

Its subcellular location is the endoplasmic reticulum membrane. Functionally, component of the ERMES/MDM complex, which serves as a molecular tether to connect the endoplasmic reticulum (ER) and mitochondria. Components of this complex are involved in the control of mitochondrial shape and protein biogenesis, and function in nonvesicular lipid trafficking between the ER and mitochondria. The MDM12-MMM1 subcomplex functions in the major beta-barrel assembly pathway that is responsible for biogenesis of all outer membrane beta-barrel proteins, and acts in a late step after the SAM complex. The MDM10-MDM12-MMM1 subcomplex further acts in the TOM40-specific pathway after the action of the MDM12-MMM1 complex. Essential for establishing and maintaining the structure of mitochondria and maintenance of mtDNA nucleoids. This Coccidioides immitis (strain RS) (Valley fever fungus) protein is Maintenance of mitochondrial morphology protein 1.